An 858-amino-acid chain; its full sequence is DNA mismatch repair protein MutS (858 aa).

Residue 613–620 participates in ATP binding; it reads GPNMAGKS.

It belongs to the DNA mismatch repair MutS family.

In terms of biological role, this protein is involved in the repair of mismatches in DNA. It is possible that it carries out the mismatch recognition step. This protein has a weak ATPase activity. The polypeptide is DNA mismatch repair protein MutS (Dehalococcoides mccartyi (strain CBDB1)).